The sequence spans 283 residues: uncharacterized protein (283 aa).

An HTH araC/xylS-type domain is found at 172-270 (EAIRDYIDER…ERSPSEYRRQ (99 aa)). 2 consecutive DNA-binding regions (H-T-H motif) follow at residues 189-210 (ESVAQAFYISPNYLSHLFQKTG) and 237-260 (VKEVAHACGFVDSNYFCRLFRKNT).

This is an uncharacterized protein from Escherichia coli (strain K12).